Consider the following 189-residue polypeptide: MKKIGLFGGTFDPPHNGHLLMANEVRFQVGLDEIWFIPNHKPPHKTDRKRADSRHRVKMVEAAIESNPHFRLELIEMEREGPSYTVDTVELLKKRHPEDEFFFMIGADMVEYLPKWHRIDDLLQMITFIGMKRPGYTGSTTYSLLFADVPAFDVSSTLIRQRIMQEKPVDYLLPKAVERYIKEHHLYES.

The protein belongs to the NadD family.

The enzyme catalyses nicotinate beta-D-ribonucleotide + ATP + H(+) = deamido-NAD(+) + diphosphate. Its pathway is cofactor biosynthesis; NAD(+) biosynthesis; deamido-NAD(+) from nicotinate D-ribonucleotide: step 1/1. Functionally, catalyzes the reversible adenylation of nicotinate mononucleotide (NaMN) to nicotinic acid adenine dinucleotide (NaAD). This chain is Probable nicotinate-nucleotide adenylyltransferase, found in Bacillus pumilus (strain SAFR-032).